The chain runs to 294 residues: Tryptophan 2,3-dioxygenase (294 aa).

Substrate is bound by residues Phe63–His67, Tyr125, and Arg129. His252 lines the heme pocket. Thr266 provides a ligand contact to substrate.

It belongs to the tryptophan 2,3-dioxygenase family. As to quaternary structure, homotetramer. Heme serves as cofactor.

It carries out the reaction L-tryptophan + O2 = N-formyl-L-kynurenine. The protein operates within amino-acid degradation; L-tryptophan degradation via kynurenine pathway; L-kynurenine from L-tryptophan: step 1/2. In terms of biological role, heme-dependent dioxygenase that catalyzes the oxidative cleavage of the L-tryptophan (L-Trp) pyrrole ring and converts L-tryptophan to N-formyl-L-kynurenine. Catalyzes the oxidative cleavage of the indole moiety. The sequence is that of Tryptophan 2,3-dioxygenase from Polaromonas sp. (strain JS666 / ATCC BAA-500).